The chain runs to 225 residues: Uridylate kinase (225 aa).

An ATP-binding site is contributed by 9–10 (GS). Glycine 46 contributes to the UMP binding site. Residues glycine 47 and arginine 51 each coordinate ATP. UMP is bound by residues aspartate 67 and 115-121 (THPAHTT). Positions 141, 142, 147, and 150 each coordinate ATP.

This sequence belongs to the UMP kinase family. Homohexamer.

The protein localises to the cytoplasm. It carries out the reaction UMP + ATP = UDP + ADP. Its pathway is pyrimidine metabolism; CTP biosynthesis via de novo pathway; UDP from UMP (UMPK route): step 1/1. With respect to regulation, inhibited by UTP. Catalyzes the reversible phosphorylation of UMP to UDP. The sequence is that of Uridylate kinase from Methanococcus maripaludis (strain C5 / ATCC BAA-1333).